The sequence spans 195 residues: Glycerol-3-phosphate acyltransferase (195 aa).

6 helical membrane-spanning segments follow: residues 4-24 (GLIL…GLLL), 53-73 (GLAA…VLIA), 80-100 (TAVW…WLGF), 110-130 (LGVL…IWLA), 133-153 (FLFR…PIAL), and 154-174 (YFLS…IVFI).

Belongs to the PlsY family. As to quaternary structure, probably interacts with PlsX.

Its subcellular location is the cell inner membrane. The enzyme catalyses an acyl phosphate + sn-glycerol 3-phosphate = a 1-acyl-sn-glycero-3-phosphate + phosphate. The protein operates within lipid metabolism; phospholipid metabolism. Catalyzes the transfer of an acyl group from acyl-phosphate (acyl-PO(4)) to glycerol-3-phosphate (G3P) to form lysophosphatidic acid (LPA). This enzyme utilizes acyl-phosphate as fatty acyl donor, but not acyl-CoA or acyl-ACP. The polypeptide is Glycerol-3-phosphate acyltransferase (Mesorhizobium japonicum (strain LMG 29417 / CECT 9101 / MAFF 303099) (Mesorhizobium loti (strain MAFF 303099))).